The chain runs to 362 residues: Trans-enoyl reductase phm4 (362 aa).

50 to 53 serves as a coordination point for NADP(+); the sequence is VDAK. Residue 136-143 participates in substrate binding; that stretch reads TCFMTCGL. Residues 171-174, 194-197, Y212, and 259-260 contribute to the NADP(+) site; these read ATAT, SPHS, and LD. 280–284 is a binding site for substrate; it reads GPIML. 349 to 350 lines the NADP(+) pocket; the sequence is VN.

It belongs to the zinc-containing alcohol dehydrogenase family. Monomer.

It functions in the pathway secondary metabolite biosynthesis. Its function is as follows. Trans-enoyl reductase; part of the gene cluster that mediates the biosynthesis of the trans-fused decalin-containing tetramic acid phomasetin, the stereochemical opposite of the HIV-1 integrase inhibitor equisetin. The PKS module of phm1 together with the enoylreductase phm4 catalyze the formation of the polyketide unit which is then conjugated to L-serine by the condensation domain of the phm1 NRPS module. Activity of the Dieckmann cyclase domain (RED) of phm1 results in release of the Dieckmann product intermediate. The Diels-Alderase phm7 then uses the Dieckmann product of phm1 as substrate and catalyzes the Diels-Alder cycloaddition to form the decalin ring of N-desmethylphomasetin. N-desmethylphomasetin is further methylated to phomasetin by the methyltransferase phm5. In Pyrenochaetopsis sp, this protein is Trans-enoyl reductase phm4.